The sequence spans 90 residues: Large ribosomal subunit protein bL27 (90 aa).

The segment at Met-1–Gly-22 is disordered.

It belongs to the bacterial ribosomal protein bL27 family.

In Coxiella burnetii (strain CbuK_Q154) (Coxiella burnetii (strain Q154)), this protein is Large ribosomal subunit protein bL27.